The primary structure comprises 174 residues: 2-C-methyl-D-erythritol 2,4-cyclodiphosphate synthase (174 aa).

3 residues coordinate a divalent metal cation: Asp-13, His-15, and His-61. 13-15 (DAH) is a 4-CDP-2-C-methyl-D-erythritol 2-phosphate binding site. Residues 75–77 (DIG), 149–152 (TTTD), Phe-156, and His-159 contribute to the 4-CDP-2-C-methyl-D-erythritol 2-phosphate site.

It belongs to the IspF family. Homotrimer. A divalent metal cation is required as a cofactor.

The catalysed reaction is 4-CDP-2-C-methyl-D-erythritol 2-phosphate = 2-C-methyl-D-erythritol 2,4-cyclic diphosphate + CMP. It participates in isoprenoid biosynthesis; isopentenyl diphosphate biosynthesis via DXP pathway; isopentenyl diphosphate from 1-deoxy-D-xylulose 5-phosphate: step 4/6. In terms of biological role, involved in the biosynthesis of isopentenyl diphosphate (IPP) and dimethylallyl diphosphate (DMAPP), two major building blocks of isoprenoid compounds. Catalyzes the conversion of 4-diphosphocytidyl-2-C-methyl-D-erythritol 2-phosphate (CDP-ME2P) to 2-C-methyl-D-erythritol 2,4-cyclodiphosphate (ME-CPP) with a corresponding release of cytidine 5-monophosphate (CMP). The protein is 2-C-methyl-D-erythritol 2,4-cyclodiphosphate synthase of Bifidobacterium longum (strain NCC 2705).